A 54-amino-acid polypeptide reads, in one-letter code: Conotoxin vc5c (54 aa).

Residues 1 to 14 (VILLLLIASIPSDA) form the signal peptide. The propeptide occupies 15–43 (VQLKTKDDMPLASFHGNARRTLQMLSNKR). E50 is modified (4-carboxyglutamate). A 6'-bromotryptophan modification is found at W51.

This sequence belongs to the conotoxin T superfamily. In terms of processing, contains 2 disulfide bonds that can be either 'C1-C3, C2-C4' or 'C1-C4, C2-C3', since these disulfide connectivities have been observed for conotoxins with cysteine framework V (for examples, see AC P0DQQ7 and AC P81755). In terms of tissue distribution, expressed by the venom duct.

The protein localises to the secreted. The sequence is that of Conotoxin vc5c from Conus victoriae (Queen Victoria cone).